A 118-amino-acid chain; its full sequence is Large ribosomal subunit protein uL22 (118 aa).

It belongs to the universal ribosomal protein uL22 family. In terms of assembly, part of the 50S ribosomal subunit.

This protein binds specifically to 23S rRNA; its binding is stimulated by other ribosomal proteins, e.g. L4, L17, and L20. It is important during the early stages of 50S assembly. It makes multiple contacts with different domains of the 23S rRNA in the assembled 50S subunit and ribosome. In terms of biological role, the globular domain of the protein is located near the polypeptide exit tunnel on the outside of the subunit, while an extended beta-hairpin is found that lines the wall of the exit tunnel in the center of the 70S ribosome. The chain is Large ribosomal subunit protein uL22 from Levilactobacillus brevis (strain ATCC 367 / BCRC 12310 / CIP 105137 / JCM 1170 / LMG 11437 / NCIMB 947 / NCTC 947) (Lactobacillus brevis).